The following is a 201-amino-acid chain: Small ribosomal subunit protein uS4 (201 aa).

The interval 1 to 46 (MARYTGPRSRISRRFGEPVMGDSKALQKKNYAPGMHGRNKKRKQSE) is disordered. Residues 92-151 (ARLDNTVYRLGIASSRRAARQLVIHKHIVVNGDVVNIPSYQLKPGDQLGVREKSKSIEAI) enclose the S4 RNA-binding domain.

This sequence belongs to the universal ribosomal protein uS4 family. As to quaternary structure, part of the 30S ribosomal subunit. Contacts protein S5. The interaction surface between S4 and S5 is involved in control of translational fidelity.

Its function is as follows. One of the primary rRNA binding proteins, it binds directly to 16S rRNA where it nucleates assembly of the body of the 30S subunit. With S5 and S12 plays an important role in translational accuracy. This Cytophaga hutchinsonii (strain ATCC 33406 / DSM 1761 / CIP 103989 / NBRC 15051 / NCIMB 9469 / D465) protein is Small ribosomal subunit protein uS4.